The following is a 562-amino-acid chain: Protein wntless (562 aa).

Topologically, residues 1 to 13 (MSGTILENLSGRK) are cytoplasmic. The chain crosses the membrane as a helical span at residues 14 to 34 (LSILVSSLMLCQVACFLMGGL). Topologically, residues 35–239 (YAPVPAGHQT…AIHQNGGFTQ (205 aa)) are lumenal. 2 N-linked (GlcNAc...) asparagine glycosylation sites follow: Asn-58 and Asn-103. A helical transmembrane segment spans residues 240-260 (VWLLLKTLLFPFVVGIMIWFW). The Cytoplasmic segment spans residues 261-270 (RRVHILQRSP). The helical transmembrane segment at 271–291 (ALLEYMLLYLGGALSFLNLPL) threads the bilayer. Residues 292–311 (EYLTLSIEMPYMLLLSDVRQ) lie on the Lumenal side of the membrane. A helical transmembrane segment spans residues 312 to 332 (GIFYAMLLSFWLVFAGEHMLI). The Cytoplasmic portion of the chain corresponds to 333 to 344 (QDTPNKSTIRSR). A helical membrane pass occupies residues 345–365 (YWKHLSAVVVGCISLFVFDIC). Topologically, residues 366 to 390 (ERGVQLRNPFYSIWTTPLGAKVAMS) are lumenal. The chain crosses the membrane as a helical span at residues 391-411 (FIVLAGVSAAIYFLFLCFMVW). The Cytoplasmic portion of the chain corresponds to 412 to 441 (KVFKDIGDKRTSLPSMSQARRLHYEGLIYR). A helical transmembrane segment spans residues 442-462 (FKFLMLATLLCAGLTVAGFIM). Topologically, residues 463–482 (GQMAEGHWKWNEDIEIQLTS) are lumenal. The chain crosses the membrane as a helical span at residues 483-503 (AFLTGVYGMWNIYIFALIILY). The Cytoplasmic segment spans residues 504-562 (APSHKQWPTMRHSDETTQSNENIVASAASEEIEFSNLPSDSNPSEISSLTSFTRKVAFD).

This sequence belongs to the wntless family. In terms of assembly, interacts with wg; in the Golgi. Interacts with Vps35, a component of the retromer complex; wls stability is regulated by Vps35.

It localises to the presynaptic cell membrane. It is found in the postsynaptic cell membrane. Its subcellular location is the cell membrane. The protein localises to the endoplasmic reticulum membrane. The protein resides in the endosome membrane. It localises to the golgi apparatus membrane. Functionally, a segment polarity gene required for wingless (wg)-dependent patterning processes, acting in both wg-sending cells and wg-target cells. In non-neuronal cells wls directs wg secretion. The wls traffic loop encompasses the Golgi, the cell surface, an endocytic compartment and a retrograde route leading back to the Golgi, and involves clathrin-mediated endocytosis and the retromer complex (a conserved protein complex consisting of Vps35 and Vps26). In neuronal cells (the larval motorneuron NMJ), the wg signal moves across the synapse via the release of wls-containing exosome-like vesicles. Postsynaptic wls is required for the trafficking of fz2 through the fz2-interacting protein Grip. The polypeptide is Protein wntless (Drosophila virilis (Fruit fly)).